A 1263-amino-acid polypeptide reads, in one-letter code: MKEISCGRRTRVSFGKTQEPLPIPDLVEIQKISYRRFLEEGLLEVLKKFSPIYSQATRSDLKKSDRGFALEFVSTRIGEPVVDPLECKAKGLTYSVPIYATARLTDMKSGEMKEEEVFLGYIPYMTDRGTFIINGAERVVVNQIVVSPGLYFSSEYIDREEYGGYFLPSRGAWLEVILDPYDGVLYAGLDGKKVNLFLFLKTIGYEKDEDILSLYPTYLDADDEDSLLLHVGSILLEDIYDGDRKIAEKWDILTKDLAERILMIDDINQIKIVHPIAQNTFEKMLELVSSSGEEGEEEEEKTKIYGLNEVTVVDAYLEIFRRLRPEELPRINAAKRYLHDLFFNPERYDLSEVGRYKVNERLRNAYIRYLIEVEGEDPEEARKKVYNENSLVLKPLDIVLASRILFDYFERRYVNDFEIDSYELRNLIRIFKEEYLEKRKTASYDLRKLVSVFRRNYGVTSDLSVLAAIRYISNINKELPSIPFDTKDHLGNKRVRTVGELVQREFERLFARAQKAIQERLTLINSLSKVSIQSLINIKSIISTVNQFFAMNQLSQFMDQVNPLSELTHKRRVSAVGPGGLRRESKVFEARNVHYSQYGRLCPIETPEGANIGFITSLAIYTKIDEYGFLMTPYRKVVNGKVTDEVVYLRANEEEDFKIVPATTPVDEEGNIIPERVVARVGEDIRLVPREEVDFMDVSTKQPFSVSASLIPFLEHDDASRALMGSNMQRQAVPLLKAEAPFVGTGMEWEAAKNSGYVTLAEHDGIVKEVDAARIVVHRTDENGNLMYDDKGNPVVDEYRLLKFVRSNQDTMINQKPIVNEGDFVKKGDPIADGPATDMGELALGRNILVAFMPWEGYNYEDAILVSQELLEEDVFTSIHIEVYETQARETRLGPEEITADIPNVSKELLKNLDENGIIRVGAYVVSDYGVGSQAILVGKVTPKGEGDTTPEEKIIRSVFGERGRDVKDTSLRLPHGVEGRVIRVDVYDQNDIAELGAGVLKLVRVYVASRKTLDIGDKLAGRHGNKGVVSNILPKEDMPFLPDGTPVQMVLNPLGIPSRMNVGQILETHLGWLAKLTGKWFATPVFEGAKEDEILRPLYEERKKRGLHLGDDENNPNGKVVLRDGRTGEPFDNPVVVGYMYMLKLVHIAKEKIHARSTGPYSLIHQQPLGGKSHFGGQRLGEMEVWALEAYGAAHTLAEMLTIKSDDIKGRNEAYKAILKNMNIPEPGVPESFRVLIKELRGLALDVRLYDENGNEIDIDKY.

This sequence belongs to the RNA polymerase beta chain family. As to quaternary structure, the RNAP catalytic core consists of 2 alpha, 1 beta, 1 beta' and 1 omega subunit. When a sigma factor is associated with the core the holoenzyme is formed, which can initiate transcription.

It catalyses the reaction RNA(n) + a ribonucleoside 5'-triphosphate = RNA(n+1) + diphosphate. Functionally, DNA-dependent RNA polymerase catalyzes the transcription of DNA into RNA using the four ribonucleoside triphosphates as substrates. The sequence is that of DNA-directed RNA polymerase subunit beta from Thermotoga petrophila (strain ATCC BAA-488 / DSM 13995 / JCM 10881 / RKU-1).